We begin with the raw amino-acid sequence, 244 residues long: tRNA (guanine-N(1)-)-methyltransferase (244 aa).

S-adenosyl-L-methionine is bound by residues Gly113 and Ile132 to Leu137.

The protein belongs to the RNA methyltransferase TrmD family. Homodimer.

It is found in the cytoplasm. It carries out the reaction guanosine(37) in tRNA + S-adenosyl-L-methionine = N(1)-methylguanosine(37) in tRNA + S-adenosyl-L-homocysteine + H(+). Specifically methylates guanosine-37 in various tRNAs. The protein is tRNA (guanine-N(1)-)-methyltransferase of Shouchella clausii (strain KSM-K16) (Alkalihalobacillus clausii).